Here is a 151-residue protein sequence, read N- to C-terminus: 3-hydroxyacyl-[acyl-carrier-protein] dehydratase FabZ (151 aa).

His56 is a catalytic residue.

This sequence belongs to the thioester dehydratase family. FabZ subfamily.

It localises to the cytoplasm. It catalyses the reaction a (3R)-hydroxyacyl-[ACP] = a (2E)-enoyl-[ACP] + H2O. Its function is as follows. Involved in unsaturated fatty acids biosynthesis. Catalyzes the dehydration of short chain beta-hydroxyacyl-ACPs and long chain saturated and unsaturated beta-hydroxyacyl-ACPs. This Rhodopseudomonas palustris (strain ATCC BAA-98 / CGA009) protein is 3-hydroxyacyl-[acyl-carrier-protein] dehydratase FabZ.